A 105-amino-acid chain; its full sequence is MSPLKKTYVLKLYVAGNTPNSVRALKTLNNILEQEFQGVYALKVIDVLKNPQLAEEDKILATPTLAKILPPPVRKIIGDLSDREKVLIGLDLLYEEFAEAEAEAE.

It belongs to the KaiB family. In terms of assembly, the KaiABC complex composition changes during the circadian cycle to control KaiC phosphorylation. Complexes KaiC(6), KaiA(2-4):KaiC(6), KaiB(6):KaiC(6) and KaiC(6):KaiB(6):KaiA(12) are among the most important forms, many form cooperatively. Undergoes a major conformational rearrangment; in the free state forms homotetramers as a dimer of dimers. When bound to the CI domain of KaiC switches to a monomeric thioredoxin-fold (KaiB(fs)). KaiB(fs) binds CikA, leading it to dephosphorylate phospho-RpaA.

In terms of biological role, key component of the KaiABC oscillator complex, which constitutes the main circadian regulator in cyanobacteria. Complex composition changes during the circadian cycle to control KaiC phosphorylation. KaiA stimulates KaiC autophosphorylation, while KaiB sequesters KaiA, leading to KaiC autodephosphorylation. Phospho-Ser-431 KaiC accumulation triggers binding of KaiB to form the KaiB(6):KaiC(6) complex, leading to changes in output regulators CikA and SasA. KaiB switches to a thioredoxin-like fold (KaiB(fs)) when bound to KaiC. KaiB(6):KaiC(6) formation exposes a site for KaiA binding that sequesters KaiA from KaiC, making the KaiC(6):KaiB(6):KaiA(12) complex that results in KaiC autodephosphorylation. Its function is as follows. A metamorphic protein which reversibly switches between an inactive tetrameric fold and a rare, thioredoxin-like monomeric fold (KaiB(fs)). KaiB(fs) binds phospho-KaiC, KaiA and CikA. KaiA and CikA compete for binding to KaiB(fs), and KaiB(fs) and SasA compete for binding to KaiC, thus the clock oscillator and output signal pathway are tightly coupled. This Cyanothece sp. (strain PCC 7425 / ATCC 29141) protein is Circadian clock oscillator protein KaiB.